Here is a 434-residue protein sequence, read N- to C-terminus: MSGEEDLIDYSDDELNNETTAPASNGKKGDAAAAAQNVDKKGSYVGIHSTGFRDFLLKPELLRAIADCGFEHPSEVQQTCIPQAMLGGDIICQAKSGLGKTAVFVLTTLQQVEPVAGECSVLVMCHTRELAFQIRNEYNRFSKYMPDIKTGVFYGGTPIQKDAEVLKNKETHPHIIVGTPGRLNALVRDKHLRLGNVRMFVLDECDKMLDQIDMRRDVQEIFRATPQQKQVMMFSATLADEIKPICRKFMQNPTEHYVDEDTKLTLHGLQQYYIPLEEREKNRKLNELLDELQFNQVIIFVKSTIRATELDKLLRECNFPSIAVHSGVSQEERIRRYKEFKEFNKRICVATDVFGRGIDIERINLAINYDLPADADSYLHRVGRAGRFGTKGLAISFVNSDQDKEVLQQIEKRFEVALPEFPKEGIDASTYMAA.

Over residues 1 to 16 the composition is skewed to acidic residues; the sequence is MSGEEDLIDYSDDELN. Positions 1 to 32 are disordered; it reads MSGEEDLIDYSDDELNNETTAPASNGKKGDAA. Residues 50-78 carry the Q motif motif; sequence TGFRDFLLKPELLRAIADCGFEHPSEVQQ. The Helicase ATP-binding domain occupies 81-256; the sequence is IPQAMLGGDI…RKFMQNPTEH (176 aa). 94–101 contributes to the ATP binding site; sequence AKSGLGKT. A DEAD box motif is present at residues 203 to 206; sequence DECD. A Helicase C-terminal domain is found at 268 to 429; sequence GLQQYYIPLE…EFPKEGIDAS (162 aa).

The protein belongs to the DEAD box helicase family. DECD subfamily.

Its subcellular location is the nucleus. The enzyme catalyses ATP + H2O = ADP + phosphate + H(+). Functionally, ATP-binding RNA helicase involved in transcription elongation and required for the export of mRNA out of the nucleus. SUB2 also plays a role in pre-mRNA splicing and spliceosome assembly. May be involved in rDNA and telomeric silencing, and maintenance of genome integrity. The protein is ATP-dependent RNA helicase SUB2 (SUB2) of Chaetomium globosum (strain ATCC 6205 / CBS 148.51 / DSM 1962 / NBRC 6347 / NRRL 1970) (Soil fungus).